Here is a 233-residue protein sequence, read N- to C-terminus: tRNA (guanine-N(7)-)-methyltransferase (233 aa).

The interval 1 to 23 (MSPQDRPSRTTEAFFGRRRGKPV) is disordered. Residues Glu64, Glu89, Asp116, and Asp138 each contribute to the S-adenosyl-L-methionine site. Asp138 is a catalytic residue. Substrate is bound by residues Lys142, Asp174, and 212–215 (TRYE).

Belongs to the class I-like SAM-binding methyltransferase superfamily. TrmB family.

It catalyses the reaction guanosine(46) in tRNA + S-adenosyl-L-methionine = N(7)-methylguanosine(46) in tRNA + S-adenosyl-L-homocysteine. It functions in the pathway tRNA modification; N(7)-methylguanine-tRNA biosynthesis. Catalyzes the formation of N(7)-methylguanine at position 46 (m7G46) in tRNA. The polypeptide is tRNA (guanine-N(7)-)-methyltransferase (Mesorhizobium japonicum (strain LMG 29417 / CECT 9101 / MAFF 303099) (Mesorhizobium loti (strain MAFF 303099))).